Reading from the N-terminus, the 429-residue chain is MPAIAIVGAQWGDEGKGKATDLLGGRVDYVVKPNGGNNAGHTVVVNGEKFELKLLPAGILSPNAVPVIGNGVVVNLEALFEEIDGLESRGHSCEHLKISANAHLVAPYHQTMDKVTERFLGQRAIGTTGRGIGPTYMDKVARLGIRVQDIFDESILRQKIEGALRQKNELLVKLYNRRAVTVDEIAEYFLGYADRLRPMVVDSVNLLNDALDEGKVVLMEGGQATYLDVDHGTYPFVTSSNPTAGGAAVGAGIGPTRFSRTIGIVKAYTTRVGAGPFPTELFDEMGEQLRTTGGEFGVNTGRPRRTGWYDAVMAHYAARINGFTDYFLTKLDVLTGIEKIPVCVAYEVDGVRHDRMPMTQTEFHHAKPVYELFDGWTEDISGARAFTDLPLNAQHYVEALEKLSGCRISAIGVGPGRDQVVQVRDLIQD.

GTP contacts are provided by residues 12-18 (GDEGKGK) and 40-42 (GHT). The active-site Proton acceptor is the D13. 2 residues coordinate Mg(2+): D13 and G40. IMP contacts are provided by residues 13 to 16 (DEGK), 38 to 41 (NAGH), T128, R142, Q223, T238, and R302. H41 serves as the catalytic Proton donor. 298–304 (VNTGRPR) is a substrate binding site. GTP contacts are provided by residues R304, 330-332 (KLD), and 412-414 (GVG).

This sequence belongs to the adenylosuccinate synthetase family. Homodimer. Mg(2+) serves as cofactor.

It localises to the cytoplasm. The enzyme catalyses IMP + L-aspartate + GTP = N(6)-(1,2-dicarboxyethyl)-AMP + GDP + phosphate + 2 H(+). It participates in purine metabolism; AMP biosynthesis via de novo pathway; AMP from IMP: step 1/2. Functionally, plays an important role in the de novo pathway of purine nucleotide biosynthesis. Catalyzes the first committed step in the biosynthesis of AMP from IMP. The protein is Adenylosuccinate synthetase of Micrococcus luteus (strain ATCC 4698 / DSM 20030 / JCM 1464 / CCM 169 / CCUG 5858 / IAM 1056 / NBRC 3333 / NCIMB 9278 / NCTC 2665 / VKM Ac-2230) (Micrococcus lysodeikticus).